The sequence spans 307 residues: Nucleotide-binding protein Achl_1824 (307 aa).

30-37 (GMSGAGRS) is an ATP binding site. Residue 81–84 (DVRS) coordinates GTP.

Belongs to the RapZ-like family.

Its function is as follows. Displays ATPase and GTPase activities. This chain is Nucleotide-binding protein Achl_1824, found in Pseudarthrobacter chlorophenolicus (strain ATCC 700700 / DSM 12829 / CIP 107037 / JCM 12360 / KCTC 9906 / NCIMB 13794 / A6) (Arthrobacter chlorophenolicus).